Reading from the N-terminus, the 434-residue chain is Homoserine dehydrogenase (434 aa).

T13 and V14 together coordinate NADPH. NAD(+)-binding residues include V14, A33, and A43. V14 contributes to the NADP(+) binding site. Position 45 (R45) interacts with NADPH. NADP(+) contacts are provided by R45, R46, and K103. Residue K103 coordinates NADPH. Na(+)-binding residues include E127, V130, G132, and I134. NADP(+) is bound by residues G185 and E188. 2 residues coordinate L-homoserine: E188 and D199. K203 (proton donor) is an active-site residue. Residue G300 participates in NADPH binding. G300 contacts NAD(+). Residue G300 participates in NADP(+) binding. In terms of domain architecture, ACT spans 353–429 (YLRIQAKDHP…GVSGPVVRIR (77 aa)).

This sequence belongs to the homoserine dehydrogenase family. It depends on a metal cation as a cofactor.

The catalysed reaction is L-homoserine + NADP(+) = L-aspartate 4-semialdehyde + NADPH + H(+). It catalyses the reaction L-homoserine + NAD(+) = L-aspartate 4-semialdehyde + NADH + H(+). It participates in amino-acid biosynthesis; L-methionine biosynthesis via de novo pathway; L-homoserine from L-aspartate: step 3/3. The protein operates within amino-acid biosynthesis; L-threonine biosynthesis; L-threonine from L-aspartate: step 3/5. Feedback inhibition by threonine. Functionally, catalyzes the conversion of L-aspartate-beta-semialdehyde (L-Asa) to L-homoserine (L-Hse), the third step in the biosynthesis of threonine and methionine from aspartate. The sequence is that of Homoserine dehydrogenase (hom) from Pseudomonas aeruginosa (strain ATCC 15692 / DSM 22644 / CIP 104116 / JCM 14847 / LMG 12228 / 1C / PRS 101 / PAO1).